A 191-amino-acid chain; its full sequence is Ribosomal RNA small subunit methyltransferase G (191 aa).

S-adenosyl-L-methionine is bound by residues G62, F67, 111–112 (IE), and R124.

Belongs to the methyltransferase superfamily. RNA methyltransferase RsmG family.

The protein localises to the cytoplasm. It catalyses the reaction guanosine(527) in 16S rRNA + S-adenosyl-L-methionine = N(7)-methylguanosine(527) in 16S rRNA + S-adenosyl-L-homocysteine. Its function is as follows. Specifically methylates the N7 position of guanine in position 527 of 16S rRNA. This is Ribosomal RNA small subunit methyltransferase G from Rickettsia typhi (strain ATCC VR-144 / Wilmington).